Consider the following 338-residue polypeptide: Lipopolysaccharide 1,2-glucosyltransferase (338 aa).

UDP is bound by residues 33 to 38 (GVDANY) and 130 to 131 (DA). The Mg(2+) site is built by aspartate 130 and aspartate 132. Short sequence motifs (DXD) lie at residues 130-132 (DAD) and 215-217 (DQD). Residue histidine 264 coordinates Mg(2+). 264-270 (HYTGATK) contributes to the UDP binding site.

The protein belongs to the glycosyltransferase 8 family. Mg(2+) is required as a cofactor.

Its subcellular location is the cell inner membrane. It catalyses the reaction UDP-glucose + [lipopolysaccharide] = UDP + D-glucosyl-[lipopolysaccharide].. It carries out the reaction alpha-D-Glc-(1-&gt;3)-[alpha-D-Gal-(1-&gt;6)]-alpha-D-Glc-(1-&gt;3)-[L-alpha-D-Hep-(1-&gt;7)]-4-O-PO3(2-)-L-alpha-D-Hep-(1-&gt;3)-4-O-PO3(2-)-L-alpha-D-Hep-(1-&gt;5)-[alpha-Kdo-(2-&gt;4)]-alpha-Kdo-(2-&gt;6)-lipid A + UDP-alpha-D-glucose = alpha-D-Glc-(1-&gt;2)-alpha-D-Glc-(1-&gt;3)-[alpha-D-Gal-(1-&gt;6)]-alpha-D-Glc-(1-&gt;3)-[L-alpha-D-Hep-(1-&gt;7)]-4-O-PO3(2-)-L-alpha-D-Hep-(1-&gt;3)-4-O-PO3(2-)-L-alpha-D-Hep-(1-&gt;5)-[alpha-Kdo-(2-&gt;4)]-alpha-Kdo-(2-&gt;6)-lipid A + UDP + H(+). It participates in bacterial outer membrane biogenesis; LPS core biosynthesis. Its function is as follows. Glucosyltransferase involved in the biosynthesis of the core oligosaccharide region of lipopolysaccharide (LPS). Catalyzes the addition of a glucose (glucose III) to the outer-core glucose II. This Escherichia coli (strain K12) protein is Lipopolysaccharide 1,2-glucosyltransferase.